Here is a 104-residue protein sequence, read N- to C-terminus: uncharacterized protein (104 aa).

The protein belongs to the mimivirus L28/L54 family.

This is an uncharacterized protein from Acanthamoeba polyphaga mimivirus (APMV).